The chain runs to 390 residues: Imidazolonepropionase (390 aa).

Fe(3+) contacts are provided by histidine 71 and histidine 73. Positions 71 and 73 each coordinate Zn(2+). 3 residues coordinate 4-imidazolone-5-propanoate: arginine 80, tyrosine 138, and histidine 165. Tyrosine 138 contributes to the N-formimidoyl-L-glutamate binding site. Position 228 (histidine 228) interacts with Fe(3+). A Zn(2+)-binding site is contributed by histidine 228. Glutamine 231 contributes to the 4-imidazolone-5-propanoate binding site. Aspartate 302 serves as a coordination point for Fe(3+). Aspartate 302 provides a ligand contact to Zn(2+). N-formimidoyl-L-glutamate is bound by residues asparagine 304 and glycine 306. Serine 307 is a binding site for 4-imidazolone-5-propanoate.

Belongs to the metallo-dependent hydrolases superfamily. HutI family. Zn(2+) is required as a cofactor. It depends on Fe(3+) as a cofactor.

It is found in the cytoplasm. It carries out the reaction 4-imidazolone-5-propanoate + H2O = N-formimidoyl-L-glutamate. It functions in the pathway amino-acid degradation; L-histidine degradation into L-glutamate; N-formimidoyl-L-glutamate from L-histidine: step 3/3. Its function is as follows. Catalyzes the hydrolytic cleavage of the carbon-nitrogen bond in imidazolone-5-propanoate to yield N-formimidoyl-L-glutamate. It is the third step in the universal histidine degradation pathway. This is Imidazolonepropionase from Streptomyces griseus subsp. griseus (strain JCM 4626 / CBS 651.72 / NBRC 13350 / KCC S-0626 / ISP 5235).